Consider the following 391-residue polypeptide: Pectate lyase B (391 aa).

The N-terminal stretch at 1 to 30 is a signal peptide; that stretch reads MKKTVRSLCSTALALTLGFTLLSGPASVQA. 3 residues coordinate Ca(2+): aspartate 181, aspartate 203, and aspartate 207. Arginine 305 is a catalytic residue.

The protein belongs to the polysaccharide lyase 1 family. Requires Ca(2+) as cofactor.

It localises to the secreted. The catalysed reaction is Eliminative cleavage of (1-&gt;4)-alpha-D-galacturonan to give oligosaccharides with 4-deoxy-alpha-D-galact-4-enuronosyl groups at their non-reducing ends.. It carries out the reaction Eliminative cleavage of (1-&gt;4)-alpha-D-galacturonan methyl ester to give oligosaccharides with 4-deoxy-6-O-methyl-alpha-D-galact-4-enuronosyl groups at their non-reducing ends.. It participates in glycan metabolism; pectin degradation. Its function is as follows. Catalyzes the depolymerization of both polygalacturonate and pectins of various methyl esterification degree, with an endo mode of action. Shows the highest activity on 20 to 34% methylated pectin but retains 67%, 51%, 25%, and 1% of its maximum activity on polygalacturonate and 8.5%, 55 to 70%, and 90% methylated pectin, respectively. In Paenibacillus amylolyticus, this protein is Pectate lyase B.